The chain runs to 306 residues: Aspartate carbamoyltransferase catalytic subunit (306 aa).

Arginine 49 and threonine 50 together coordinate carbamoyl phosphate. Position 77 (lysine 77) interacts with L-aspartate. 3 residues coordinate carbamoyl phosphate: arginine 99, histidine 127, and glutamine 130. Residues arginine 160 and arginine 211 each coordinate L-aspartate. Carbamoyl phosphate contacts are provided by alanine 250 and proline 251.

This sequence belongs to the aspartate/ornithine carbamoyltransferase superfamily. ATCase family. In terms of assembly, heterododecamer (2C3:3R2) of six catalytic PyrB chains organized as two trimers (C3), and six regulatory PyrI chains organized as three dimers (R2).

It catalyses the reaction carbamoyl phosphate + L-aspartate = N-carbamoyl-L-aspartate + phosphate + H(+). The protein operates within pyrimidine metabolism; UMP biosynthesis via de novo pathway; (S)-dihydroorotate from bicarbonate: step 2/3. In terms of biological role, catalyzes the condensation of carbamoyl phosphate and aspartate to form carbamoyl aspartate and inorganic phosphate, the committed step in the de novo pyrimidine nucleotide biosynthesis pathway. This chain is Aspartate carbamoyltransferase catalytic subunit, found in Bacillus licheniformis (strain ATCC 14580 / DSM 13 / JCM 2505 / CCUG 7422 / NBRC 12200 / NCIMB 9375 / NCTC 10341 / NRRL NRS-1264 / Gibson 46).